The following is an 814-amino-acid chain: Leucine--tRNA ligase (814 aa).

Positions 42 to 52 (PYPSGNLHIGH) match the 'HIGH' region motif. A 'KMSKS' region motif is present at residues 582–586 (KMSKS). Residue lysine 585 coordinates ATP.

This sequence belongs to the class-I aminoacyl-tRNA synthetase family.

The protein resides in the cytoplasm. The catalysed reaction is tRNA(Leu) + L-leucine + ATP = L-leucyl-tRNA(Leu) + AMP + diphosphate. The chain is Leucine--tRNA ligase from Herpetosiphon aurantiacus (strain ATCC 23779 / DSM 785 / 114-95).